The following is a 336-amino-acid chain: Foldase protein PrsA (336 aa).

Residues 1–22 form the signal peptide; that stretch reads MKSAKKLLSVLCLGIFILTFTA. C23 carries N-palmitoyl cysteine lipidation. C23 carries the S-diacylglycerol cysteine lipid modification. The PpiC domain maps to 194 to 286; it reads PNTMNVSHIL…FGYHIIKINS (93 aa).

Belongs to the PrsA family.

It localises to the cell membrane. The catalysed reaction is [protein]-peptidylproline (omega=180) = [protein]-peptidylproline (omega=0). Its function is as follows. Plays a major role in protein secretion by helping the post-translocational extracellular folding of several secreted proteins. The chain is Foldase protein PrsA from Clostridium botulinum (strain 657 / Type Ba4).